Reading from the N-terminus, the 318-residue chain is Taste receptor type 2 member 14 (318 aa).

Residues M1 to N7 lie on the Extracellular side of the membrane. The chain crosses the membrane as a helical span at residues I8–A28. Residues L29–R55 are Cytoplasmic-facing. Residues I56–F76 form a helical membrane-spanning segment. The Extracellular segment spans residues A77 to N87. Residues T86 and W89 each contribute to the cholesterol site. A helical transmembrane segment spans residues I88–F108. Topologically, residues L109–V129 are cytoplasmic. The chain crosses the membrane as a helical span at residues V130–I150. The Extracellular portion of the chain corresponds to H151–S184. 2 N-linked (GlcNAc...) asparagine glycosylation sites follow: N153 and N162. Residue A180 coordinates cholesterol. The helical transmembrane segment at V185–L205 threads the bilayer. The Cytoplasmic portion of the chain corresponds to W206 to Q232. The helical transmembrane segment at T233–W253 threads the bilayer. At T254–N261 the chain is on the extracellular side. Residues L262 to I282 traverse the membrane as a helical segment. L265 and V268 together coordinate cholesterol. Over L283 to S317 the chain is Cytoplasmic.

The protein belongs to the G-protein coupled receptor T2R family. As to quaternary structure, core component of the TAS2R14-GNAI1 complex, consisting of TAS2R14, GNAI1, GNB1 and GNG2; within the complex interacts with GNAI1. Core component of the TAS2R14-GNAT3 complex, consisting of TAS2R14, GNAT3, GNB1 and GNG2; within the complex interacts with GNAT3. Core component of the TAS2R14-GNAS2 complex, consisting of TAS2R14, GNAS2, GNB1 and GNG2; within the complex interacts with GNAS2.

It is found in the membrane. It carries out the reaction Ca(2+)(in) = Ca(2+)(out). It catalyses the reaction 3',5'-cyclic AMP(in) = 3',5'-cyclic AMP(out). Basal activity is enhanced by binding to bitter tastants, such as flufenamic acid and aristolochic acid. Regulated by cholesterol in a concentration-dependent manner. Its function is as follows. Gustducin-linked G-protein coupled receptor that plays a role in the perception of bitterness. The activity of this receptor stimulates GNAT3, activating the gustducin G-protein pathway. Likely plays a role in sensing the chemical composition of the gastrointestinal content and other extra-oral tissues via the inhibitory G-protein pathways. This is Taste receptor type 2 member 14 (TAS2R14) from Pongo pygmaeus (Bornean orangutan).